Reading from the N-terminus, the 118-residue chain is UPF0145 protein PTO0347 (118 aa).

It belongs to the UPF0145 family.

The polypeptide is UPF0145 protein PTO0347 (Picrophilus torridus (strain ATCC 700027 / DSM 9790 / JCM 10055 / NBRC 100828 / KAW 2/3)).